A 558-amino-acid chain; its full sequence is Arginine--tRNA ligase (558 aa).

The short motif at 129-139 is the 'HIGH' region element; it reads ANPTGPLHVGH.

It belongs to the class-I aminoacyl-tRNA synthetase family. As to quaternary structure, monomer.

Its subcellular location is the cytoplasm. The enzyme catalyses tRNA(Arg) + L-arginine + ATP = L-arginyl-tRNA(Arg) + AMP + diphosphate. The chain is Arginine--tRNA ligase from Polaromonas naphthalenivorans (strain CJ2).